The sequence spans 130 residues: Small ribosomal subunit protein uS9 (130 aa).

The protein belongs to the universal ribosomal protein uS9 family.

This Bordetella bronchiseptica (strain ATCC BAA-588 / NCTC 13252 / RB50) (Alcaligenes bronchisepticus) protein is Small ribosomal subunit protein uS9.